The following is a 206-amino-acid chain: Probable GTP-binding protein EngB (206 aa).

One can recognise an EngB-type G domain in the interval 8–195; it reads RDAEVVLVGR…EECLRTRFHE (188 aa). Residues 16–23, 41–45, 60–63, 140–143, and 175–177 contribute to the GTP site; these read GRSNVGKS, GVTRQ, DLPG, NKTD, and ICA. Mg(2+)-binding residues include Ser-23 and Thr-43.

Belongs to the TRAFAC class TrmE-Era-EngA-EngB-Septin-like GTPase superfamily. EngB GTPase family. Mg(2+) serves as cofactor.

Its function is as follows. Necessary for normal cell division and for the maintenance of normal septation. The polypeptide is Probable GTP-binding protein EngB (Halorubrum lacusprofundi (strain ATCC 49239 / DSM 5036 / JCM 8891 / ACAM 34)).